A 1646-amino-acid chain; its full sequence is MRPPTTPPVPTTAPGRQGATGGLRKRGLRLTPEPGEGGGCSLEARGREEESRQKRRMVAQASGREETEAKENGKVTEAPSDEPQPGTDLVRKTSITNSESLQTVECSEFQSMAFLQSLAKEELVEGIKRRIQIKKCKSSENPPLKITKNEATQNIMVESQDELFKNTPKYSCNSLSPGVEKNCSFESHDFSFLHSEGCNNKNGFEDEPHGVCLHAEENSLKSKKENLRNLAEKDDTKTTKFLKTEKNVIASKLLLEESHLYQNKNNGLTSCLQSEKNKYSVEENNTGRKHRKKMKLSEKEEKGIDLTLSNVCNNSELVLQEHQIGMEGKETETLEHKKSFLKALRKMNHNTLPPVDHLCLPETVGKTSCRHSTNVVLQKTLESSLKEDTKNASETLGCRRLQPEEYFKSMTSSTVKSPSDSHPMGKRSPRGDLKTDTEESKVSCRRIIPMTGKRVWPLYSCARITAECWKKTSLSDLNDSLPGSLGNVRQHDFLMHQTNQTHLPDSKRLQPSLIERTIESSSKEVYDSELSSLSSVSSVEPTLLDIKETIPHDKKTKLEEPSRNGTEVVSSATEDIQLSNITQILTGNKKKKGNLSKLNLTVAPQESQEANNCANKTVHRKACITKQTLVAPDLVKILNTGRLTNFKIPLLKNKTGKRGEVSARSSEREAYSPLELLDSLSGVEAKQNRNKENICTTSGPQSLNIHSVTPGQTSSHTFYNKNSCTSPSFTKKGYDNKTCNHISETGNTISNKESLSIKIENNTFSCDLGYMEQSSFCSKKQEAFVPISSEISGRKMTKSISELKLGFPDILKAYEDDVLLIDVIQDDPELFGISSEGDLSFASEVSKISQEPRVSEEHPSADFKHRHLPGKKEPGDLSKEVALLDPGLLKLEICPSLSAAKEPQHDPKGAAISLEATEETVISENLEDLSEQARASDSDTKCVSSDKATVVEEQENTHEVCKSKDSRSVEAVSTECHLALGPNTLCSSAPPLTLSSHQDVAPAPWTNDFRFPGRYSVLQLQNPETCEIFKREKNFGVFQKPLGLMIPHRYCKLHFNTLRGCERAQCKFVHVPEQGDEKICMDVFKKYIRVNEQRLLHRAAYIFLEYYRKFPPGIHFSLQVLNDLLISLLKHCLLKEVFQVVQLSIMAKMLPALKILLKIFEYVAAMKLRNAVPALIEIFCKFIEAGMIPDPEHLNYIVKLLHQAQASQQEISAVLEAKSRLQVRQLRKNWTCDLDSALSEVENCKEKGDWTKLGNLYISIKMGCEEFADFQRFCACVAETLTEDYKEERPGVPFCEFAETVSKDPQYSEVDKTLLGRIGISAVYFYHRLLLWSKGRKVLDILYELKIHFTSLKGLTGPEKIAPRCQIVNVAAEIFIKSGSLDGAIWVLRESEWITSTPLWPCDRADVLHRHNLLCAIAHEILGKNLYKQTFEVLRNLPGFQNSQEAMGVSQSSLLFNELLDACIESNSLGISSSVADFMVAKSIPIDFSFLRRLITSLGRSCLWLKARAHYKSALSLGCYPPLEGNVYRKLLLVPSYLSEIEMLLAIEIFLVSNASSIQSPGAPTQVLQIVLKRCEESKPRSKDDYQAAVERLIMAARISDPKLFIKHMTVNINKEQVYSLEHCSAVKWLKENMKWAGKVWLFTNH.

Residues 1-11 (MRPPTTPPVPT) show a composition bias toward pro residues. Disordered regions lie at residues 1–90 (MRPP…TDLV), 407–439 (FKSM…DTEE), and 850–877 (QEPR…PGDL). A compositionally biased stretch (basic and acidic residues) spans 63 to 74 (GREETEAKENGK). Residues 409 to 420 (SMTSSTVKSPSD) show a composition bias toward polar residues. 2 stretches are compositionally biased toward basic and acidic residues: residues 429-439 (PRGDLKTDTEE) and 853-863 (RVSEEHPSADF).

The protein localises to the cytoplasm. It is found in the cytosol. Important for normal spermatogenesis and male fertility. Specifically required for progression to the post-meiotic stages of spermatocyte development. Seems to be necessary for normal expression levels of a number of testis-expressed gene transcripts, although its role in this process is unclear. In Rattus norvegicus (Rat), this protein is Protein TOPAZ1 (Topaz1).